Here is a 362-residue protein sequence, read N- to C-terminus: Cytochrome P450 monooxygenase-like protein avaN (362 aa).

The helical transmembrane segment at 3–23 (VILAIFIAAAGCLFSSWRIYW) threads the bilayer.

Belongs to the cytochrome P450 family.

The protein localises to the membrane. Its pathway is secondary metabolite biosynthesis. Its function is as follows. Cytochrome P450 monooxygenase-like protein; part of the cluster that mediates the biosynthesis of a highly modified cyclo-arginine-tryptophan dipeptide (cRW). The first step of the pathway is perfornmed by the arginine-containing cyclodipeptide synthase (RCPDS) avaA that acts as the scaffold-generating enzyme and is responsible for formation of the cyclo-Arg-Trp (cRW) diketopiperazine. AvaB then acts as a multifunctional flavoenzyme that is responsible for generating the cyclo-Arg-formylkynurenine DKP, which can be deformylated by avaC. AvaB then further catalyzes an additional N-oxidation followed by cyclization and dehydration. The next step is an N-acetylation of the guanidine group catalyzed by the arginine N-acetyltransferase avaD. The roles of the additional enzymes identified within the ava cluster still have to be determined. In Aspergillus versicolor, this protein is Cytochrome P450 monooxygenase-like protein avaN.